The sequence spans 25 residues: Xenoposin precursor fragment BM1 (25 aa).

In terms of tissue distribution, expressed by the skin glands.

The protein resides in the secreted. Antimicrobial peptide. The chain is Xenoposin precursor fragment BM1 from Xenopus boumbaensis (Mawa clawed frog).